The primary structure comprises 79 residues: MEKIVKFDLKYDELLKKIPYKYAIPVVVAKRAEAIREYARPFVITDDENYVSIAFMELSLNYIRIKNEEILKALIPKVK.

Belongs to the RNA polymerase subunit omega family. In terms of assembly, the RNAP catalytic core consists of 2 alpha, 1 beta, 1 beta' and 1 omega subunit. When a sigma factor is associated with the core the holoenzyme is formed, which can initiate transcription.

The catalysed reaction is RNA(n) + a ribonucleoside 5'-triphosphate = RNA(n+1) + diphosphate. Its function is as follows. Promotes RNA polymerase assembly. Latches the N- and C-terminal regions of the beta' subunit thereby facilitating its interaction with the beta and alpha subunits. This chain is DNA-directed RNA polymerase subunit omega (rpoZ), found in Thermotoga maritima (strain ATCC 43589 / DSM 3109 / JCM 10099 / NBRC 100826 / MSB8).